Here is a 360-residue protein sequence, read N- to C-terminus: UDP-N-acetylglucosamine--N-acetylmuramyl-(pentapeptide) pyrophosphoryl-undecaprenol N-acetylglucosamine transferase (360 aa).

Residues 15–17 (TGG), asparagine 124, arginine 165, serine 191, and glutamine 285 contribute to the UDP-N-acetyl-alpha-D-glucosamine site.

It belongs to the glycosyltransferase 28 family. MurG subfamily.

The protein localises to the cell inner membrane. It catalyses the reaction di-trans,octa-cis-undecaprenyl diphospho-N-acetyl-alpha-D-muramoyl-L-alanyl-D-glutamyl-meso-2,6-diaminopimeloyl-D-alanyl-D-alanine + UDP-N-acetyl-alpha-D-glucosamine = di-trans,octa-cis-undecaprenyl diphospho-[N-acetyl-alpha-D-glucosaminyl-(1-&gt;4)]-N-acetyl-alpha-D-muramoyl-L-alanyl-D-glutamyl-meso-2,6-diaminopimeloyl-D-alanyl-D-alanine + UDP + H(+). The protein operates within cell wall biogenesis; peptidoglycan biosynthesis. In terms of biological role, cell wall formation. Catalyzes the transfer of a GlcNAc subunit on undecaprenyl-pyrophosphoryl-MurNAc-pentapeptide (lipid intermediate I) to form undecaprenyl-pyrophosphoryl-MurNAc-(pentapeptide)GlcNAc (lipid intermediate II). This Gloeothece citriformis (strain PCC 7424) (Cyanothece sp. (strain PCC 7424)) protein is UDP-N-acetylglucosamine--N-acetylmuramyl-(pentapeptide) pyrophosphoryl-undecaprenol N-acetylglucosamine transferase.